Consider the following 37-residue polypeptide: Cytochrome b6-f complex subunit 5 (37 aa).

The helical transmembrane segment at 5–25 threads the bilayer; it reads LLSGIVLGLIPITLAGLFVTA.

It belongs to the PetG family. The 4 large subunits of the cytochrome b6-f complex are cytochrome b6, subunit IV (17 kDa polypeptide, PetD), cytochrome f and the Rieske protein, while the 4 small subunits are PetG, PetL, PetM and PetN. The complex functions as a dimer.

It localises to the plastid. It is found in the chloroplast thylakoid membrane. Its function is as follows. Component of the cytochrome b6-f complex, which mediates electron transfer between photosystem II (PSII) and photosystem I (PSI), cyclic electron flow around PSI, and state transitions. PetG is required for either the stability or assembly of the cytochrome b6-f complex. The sequence is that of Cytochrome b6-f complex subunit 5 from Chaetosphaeridium globosum (Charophycean green alga).